The sequence spans 187 residues: Peptidoglycan-recognition protein 2 (187 aa).

Positions 1–19 (MKAFLVALVVAIELTLVFA) are cleaved as a signal peptide. Cystine bridges form between Cys21/Cys144 and Cys58/Cys64. The N-acetylmuramoyl-L-alanine amidase domain maps to 43–170 (KPLKYVIIHH…RTVRPTDSPG (128 aa)).

It belongs to the N-acetylmuramoyl-L-alanine amidase 2 family. As to expression, localizes to plasma (at protein level).

Its subcellular location is the secreted. In terms of biological role, peptidoglycan-recognition protein probably involved in innate immunity by binding to peptidoglycans (PGN) of bacteria and activating the prophenoloxidase (proPO) cascade immune response. Binds to 1,3-beta-D-glucan and PGN. This is Peptidoglycan-recognition protein 2 (PGRP-2) from Holotrichia diomphalia (Korean black chafer).